Reading from the N-terminus, the 370-residue chain is Small ribosomal subunit biogenesis GTPase RsgA 1 (370 aa).

The CP-type G domain maps to 97–255 (QTQLDRPPIA…LADTPGFNQP (159 aa)). GTP-binding positions include 146-149 (NKSD) and 197-205 (GPSGVGKSS). Zn(2+) contacts are provided by C280, C285, H287, and C293. The interval 325 to 370 (PESTLKLKTKGKGQSQYEPKLESKKYRRTSRRTQVQGLQDLYQEEE) is disordered.

This sequence belongs to the TRAFAC class YlqF/YawG GTPase family. RsgA subfamily. In terms of assembly, monomer. Associates with 30S ribosomal subunit, binds 16S rRNA. Zn(2+) is required as a cofactor.

It is found in the cytoplasm. Functionally, one of several proteins that assist in the late maturation steps of the functional core of the 30S ribosomal subunit. Helps release RbfA from mature subunits. May play a role in the assembly of ribosomal proteins into the subunit. Circularly permuted GTPase that catalyzes slow GTP hydrolysis, GTPase activity is stimulated by the 30S ribosomal subunit. The polypeptide is Small ribosomal subunit biogenesis GTPase RsgA 1 (Nostoc sp. (strain PCC 7120 / SAG 25.82 / UTEX 2576)).